The sequence spans 415 residues: Lupus La protein homolog (415 aa).

An HTH La-type RNA-binding domain is found at 7-99; it reads NEKMTALEAK…RRSPSRPLPE (93 aa). A phosphoserine mark is found at serine 92 and serine 94. Positions 111–187 constitute an RRM domain; sequence RSVYIKGFPT…TNLLILFKED (77 aa). Lysine 116 is modified (N6-acetyllysine). Threonine 120 carries the phosphothreonine modification. Lysine 128, lysine 327, and lysine 356 each carry N6-acetyllysine. One can recognise a xRRM domain in the interval 226 to 346; it reads EGKMGCLLKF…GRFKGSHVFT (121 aa). The segment at 349-415 is disordered; sequence RRFKGKGKGN…KKRENGARDK (67 aa). Threonine 377 is modified (phosphothreonine). Basic and acidic residues predominate over residues 377–415; the sequence is TRFDDDDRRRGPMKRGRDGRDREEPASKHKKRENGARDK.

In terms of assembly, interacts with DDX15. May interact with RUFY1. Phosphorylated.

It is found in the nucleus. In terms of biological role, binds to the 3' poly(U) terminus of nascent RNA polymerase III transcripts, protecting them from exonuclease digestion and facilitating their folding and maturation. This is Lupus La protein homolog (Ssb) from Mus musculus (Mouse).